Consider the following 333-residue polypeptide: Chlorophyllide reductase 35.5 kDa chain (333 aa).

Positions 1–17 (MTDAPELKAFDQRLRDE) are enriched in basic and acidic residues. Positions 1–30 (MTDAPELKAFDQRLRDEAAEEPTLEVPQGE) are disordered. Residues 45–50 (GIGKSF) and Lys74 contribute to the ATP site. Ser49 contributes to the Mg(2+) binding site. [4Fe-4S] cluster is bound by residues Cys130 and Cys165. An ATP-binding site is contributed by 219–220 (NK).

Belongs to the NifH/BchL/ChlL family. As to quaternary structure, homodimer. Chlorophyllide reductase is composed of three subunits; BchX, BchY and BchZ. Requires [4Fe-4S] cluster as cofactor.

The enzyme catalyses 3-deacetyl-3-vinylbacteriochlorophyllide a + 2 oxidized [2Fe-2S]-[ferredoxin] + ADP + phosphate = chlorophyllide a + 2 reduced [2Fe-2S]-[ferredoxin] + ATP + H2O + H(+). It carries out the reaction bacteriochlorophyllide a + 2 oxidized [2Fe-2S]-[ferredoxin] + ADP + phosphate = 3-acetyl-3-devinylchlorophyllide a + 2 reduced [2Fe-2S]-[ferredoxin] + ATP + H2O + H(+). The catalysed reaction is 3-deacetyl-3-(1-hydroxyethyl)bacteriochlorophyllide a + 2 oxidized [2Fe-2S]-[ferredoxin] + ADP + phosphate = 3-devinyl-3-(1-hydroxyethyl)chlorophyllide a + 2 reduced [2Fe-2S]-[ferredoxin] + ATP + H2O + H(+). It functions in the pathway porphyrin-containing compound metabolism; bacteriochlorophyll biosynthesis. In terms of biological role, converts chlorophylls (Chl) into bacteriochlorophylls (BChl) by reducing ring B of the tetrapyrrole. This Cereibacter sphaeroides (strain ATCC 17023 / DSM 158 / JCM 6121 / CCUG 31486 / LMG 2827 / NBRC 12203 / NCIMB 8253 / ATH 2.4.1.) (Rhodobacter sphaeroides) protein is Chlorophyllide reductase 35.5 kDa chain (bchX).